The sequence spans 292 residues: Protein/nucleic acid deglycase HchA (292 aa).

Residues 1–12 (MSQDVNELSKQP) are compositionally biased toward polar residues. The tract at residues 1–23 (MSQDVNELSKQPTPDKAEDNAFF) is disordered. The active-site Nucleophile is Cys-190.

Belongs to the peptidase C56 family. HchA subfamily.

It is found in the cytoplasm. It catalyses the reaction N(omega)-(1-hydroxy-2-oxopropyl)-L-arginyl-[protein] + H2O = lactate + L-arginyl-[protein] + H(+). The enzyme catalyses N(6)-(1-hydroxy-2-oxopropyl)-L-lysyl-[protein] + H2O = lactate + L-lysyl-[protein] + H(+). It carries out the reaction S-(1-hydroxy-2-oxopropyl)-L-cysteinyl-[protein] + H2O = lactate + L-cysteinyl-[protein] + H(+). The catalysed reaction is N(omega)-(1-hydroxy-2-oxoethyl)-L-arginyl-[protein] + H2O = L-arginyl-[protein] + glycolate + H(+). It catalyses the reaction N(6)-(1-hydroxy-2-oxoethyl)-L-lysyl-[protein] + H2O = glycolate + L-lysyl-[protein] + H(+). The enzyme catalyses S-(1-hydroxy-2-oxoethyl)-L-cysteinyl-[protein] + H2O = glycolate + L-cysteinyl-[protein] + H(+). It carries out the reaction N(2)-(1-hydroxy-2-oxopropyl)-dGTP + H2O = lactate + dGTP + H(+). The catalysed reaction is N(2)-(1-hydroxy-2-oxopropyl)-GTP + H2O = lactate + GTP + H(+). It catalyses the reaction N(2)-(1-hydroxy-2-oxopropyl)-GDP + H2O = lactate + GDP + H(+). The enzyme catalyses N(2)-(1-hydroxy-2-oxopropyl)-GMP + H2O = lactate + GMP + H(+). It carries out the reaction N(2)-(1-hydroxy-2-oxoethyl)-dGTP + H2O = dGTP + glycolate + H(+). The catalysed reaction is N(2)-(1-hydroxy-2-oxoethyl)-GTP + H2O = glycolate + GTP + H(+). It catalyses the reaction N(2)-(1-hydroxy-2-oxoethyl)-GDP + H2O = glycolate + GDP + H(+). The enzyme catalyses N(2)-(1-hydroxy-2-oxoethyl)-GMP + H2O = glycolate + GMP + H(+). It carries out the reaction an N(2)-(1-hydroxy-2-oxopropyl)-guanosine in RNA + H2O = a guanosine in RNA + lactate + H(+). The catalysed reaction is an N(2)-(1-hydroxy-2-oxopropyl)-2'-deoxyguanosine in DNA + H2O = a 2'-deoxyguanosine in DNA + lactate + H(+). It catalyses the reaction an N(2)-(1-hydroxy-2-oxoethyl)-guanosine in RNA + H2O = a guanosine in RNA + glycolate + H(+). The enzyme catalyses an N(2)-(1-hydroxy-2-oxoethyl)-2'-deoxyguanosine in DNA + H2O = a 2'-deoxyguanosine in DNA + glycolate + H(+). Its function is as follows. Protein and nucleotide deglycase that catalyzes the deglycation of the Maillard adducts formed between amino groups of proteins or nucleotides and reactive carbonyl groups of glyoxals. Thus, functions as a protein deglycase that repairs methylglyoxal- and glyoxal-glycated proteins, and releases repaired proteins and lactate or glycolate, respectively. Deglycates cysteine, arginine and lysine residues in proteins, and thus reactivates these proteins by reversing glycation by glyoxals. Acts on early glycation intermediates (hemithioacetals and aminocarbinols), preventing the formation of Schiff bases and advanced glycation endproducts (AGE). Also functions as a nucleotide deglycase able to repair glycated guanine in the free nucleotide pool (GTP, GDP, GMP, dGTP) and in DNA and RNA. Is thus involved in a major nucleotide repair system named guanine glycation repair (GG repair), dedicated to reversing methylglyoxal and glyoxal damage via nucleotide sanitization and direct nucleic acid repair. Plays an important role in protecting cells from carbonyl stress. The chain is Protein/nucleic acid deglycase HchA from Staphylococcus aureus (strain Newman).